The following is a 383-amino-acid chain: uncharacterized protein (383 aa).

[4Fe-4S] cluster is bound by residues cysteine 12, cysteine 18, cysteine 21, and cysteine 88. Positions 219, 246, 267, and 314 each coordinate S-adenosyl-L-methionine. Cysteine 341 (nucleophile) is an active-site residue.

Belongs to the class I-like SAM-binding methyltransferase superfamily. RNA M5U methyltransferase family.

This is an uncharacterized protein from Protochlamydia amoebophila (strain UWE25).